A 134-amino-acid polypeptide reads, in one-letter code: Small ribosomal subunit protein uS8c (134 aa).

Belongs to the universal ribosomal protein uS8 family. In terms of assembly, part of the 30S ribosomal subunit.

The protein localises to the plastid. It is found in the chloroplast. Functionally, one of the primary rRNA binding proteins, it binds directly to 16S rRNA central domain where it helps coordinate assembly of the platform of the 30S subunit. This Coffea arabica (Arabian coffee) protein is Small ribosomal subunit protein uS8c (rps8).